We begin with the raw amino-acid sequence, 394 residues long: Ceramide glucosyltransferase-B (394 aa).

The Lumenal portion of the chain corresponds to 1 to 10 (MAVLDLALQG). A helical membrane pass occupies residues 11 to 32 (LAIFGCILFFVLWFMHFLSIVY). Over 33–195 (TRLHLNKKVS…QVYFGTSHPR (163 aa)) the chain is Cytoplasmic. Residue D92 is a short sequence motif, D1. Position 144 (D144) is a short sequence motif, D2. The helical transmembrane segment at 196 to 215 (SYISANVTGIKCVTGMSCLM) threads the bilayer. The Lumenal segment spans residues 216-287 (RKEVLDQAGG…KLRINMLPAT (72 aa)). Residue D236 is a short sequence motif, D3. Residue D236 is the Proton acceptor of the active site. Positions 272-276 (RMIRW) match the (Q/R)XXRW motif. The chain crosses the membrane as a helical span at residues 288–304 (IICEPISECFVASLIIG). Over 305 to 309 (WAAHH) the chain is Cytoplasmic. The helical transmembrane segment at 310 to 328 (IFRWDIMVFFMCHCLAWFI) threads the bilayer. Residues 329 to 348 (FDYIQLRGVQGGPLNFSKLD) lie on the Lumenal side of the membrane. The helical transmembrane segment at 349–369 (YAVAWFIRESMTIYIFLSALW) threads the bilayer. Over 370-394 (DPTISWRTGRYRLRCGGTAEEILDV) the chain is Cytoplasmic.

It belongs to the glycosyltransferase 2 family.

The protein localises to the golgi apparatus membrane. It carries out the reaction an N-acylsphing-4-enine + UDP-alpha-D-glucose = a beta-D-glucosyl-(1&lt;-&gt;1')-N-acylsphing-4-enine + UDP + H(+). It catalyses the reaction UDP-alpha-D-xylose + an N-acylsphing-4-enine = a beta-D-xylosyl-(1&lt;-&gt;1')-N-acylsphing-4-enine + UDP + H(+). The enzyme catalyses N-(9Z-octadecenoyl)-sphing-4-enine + UDP-alpha-D-xylose = beta-D-xylosyl-(1&lt;-&gt;1')-N-(9Z-octadecenoyl)-sphing-4-enine + UDP + H(+). It participates in lipid metabolism; sphingolipid metabolism. Participates in the initial step of the glucosylceramide-based glycosphingolipid/GSL synthetic pathway at the cytosolic surface of the Golgi. Catalyzes the transfer of glucose from UDP-glucose to ceramide to produce glucosylceramide/GlcCer (such as beta-D-glucosyl-(1&lt;-&gt;1')-N-acylsphing-4-enine). Glucosylceramide is the core component of glycosphingolipids/GSLs, amphipathic molecules consisting of a ceramide lipid moiety embedded in the outer leaflet of the membrane, linked to one of hundreds of different externally oriented oligosaccharide structures. Glycosphingolipids are essential components of membrane microdomains that mediate membrane trafficking and signal transduction. They are implicated in many fundamental cellular processes, including growth, differentiation, migration, morphogenesis, cell-to-cell and cell-to-matrix interactions. Catalyzes the synthesis of xylosylceramide/XylCer (such as beta-D-xylosyl-(1&lt;-&gt;1')-N-acylsphing-4-enine) using UDP-Xyl as xylose donor. In Xenopus laevis (African clawed frog), this protein is Ceramide glucosyltransferase-B (ugcg-b).